Here is a 166-residue protein sequence, read N- to C-terminus: Endoribonuclease YbeY (166 aa).

Zn(2+)-binding residues include H111, H115, and H121. The disordered stretch occupies residues L141–E166. Residues A153–E166 show a composition bias toward basic and acidic residues.

This sequence belongs to the endoribonuclease YbeY family. Zn(2+) serves as cofactor.

Its subcellular location is the cytoplasm. Its function is as follows. Single strand-specific metallo-endoribonuclease involved in late-stage 70S ribosome quality control and in maturation of the 3' terminus of the 16S rRNA. This is Endoribonuclease YbeY from Pseudomonas syringae pv. tomato (strain ATCC BAA-871 / DC3000).